The following is a 98-amino-acid chain: Large ribosomal subunit protein uL23 (98 aa).

The protein belongs to the universal ribosomal protein uL23 family. As to quaternary structure, part of the 50S ribosomal subunit. Contacts protein L29, and trigger factor when it is bound to the ribosome.

In terms of biological role, one of the early assembly proteins it binds 23S rRNA. One of the proteins that surrounds the polypeptide exit tunnel on the outside of the ribosome. Forms the main docking site for trigger factor binding to the ribosome. The polypeptide is Large ribosomal subunit protein uL23 (Nitrobacter winogradskyi (strain ATCC 25391 / DSM 10237 / CIP 104748 / NCIMB 11846 / Nb-255)).